The chain runs to 359 residues: Peptide chain release factor 1 (359 aa).

The residue at position 235 (Gln235) is an N5-methylglutamine. A disordered region spans residues 283 to 309 (QKAESERSQARRSQVGSGDRSERIRTY).

The protein belongs to the prokaryotic/mitochondrial release factor family. Methylated by PrmC. Methylation increases the termination efficiency of RF1.

It localises to the cytoplasm. In terms of biological role, peptide chain release factor 1 directs the termination of translation in response to the peptide chain termination codons UAG and UAA. The protein is Peptide chain release factor 1 of Brucella suis (strain ATCC 23445 / NCTC 10510).